The sequence spans 281 residues: Biotin synthase (281 aa).

Positions 1-230 constitute a Radical SAM core domain; the sequence is MNQKIFLCSI…AQRIMVAGGR (230 aa). 3 residues coordinate [4Fe-4S] cluster: cysteine 18, cysteine 22, and cysteine 25. 3 residues coordinate [2Fe-2S] cluster: cysteine 62, cysteine 97, and arginine 223.

Belongs to the radical SAM superfamily. Biotin synthase family. In terms of assembly, homodimer. [4Fe-4S] cluster is required as a cofactor. Requires [2Fe-2S] cluster as cofactor.

The catalysed reaction is (4R,5S)-dethiobiotin + (sulfur carrier)-SH + 2 reduced [2Fe-2S]-[ferredoxin] + 2 S-adenosyl-L-methionine = (sulfur carrier)-H + biotin + 2 5'-deoxyadenosine + 2 L-methionine + 2 oxidized [2Fe-2S]-[ferredoxin]. Its pathway is cofactor biosynthesis; biotin biosynthesis; biotin from 7,8-diaminononanoate: step 2/2. Its function is as follows. Catalyzes the conversion of dethiobiotin (DTB) to biotin by the insertion of a sulfur atom into dethiobiotin via a radical-based mechanism. The polypeptide is Biotin synthase (Sulfurimonas denitrificans (strain ATCC 33889 / DSM 1251) (Thiomicrospira denitrificans (strain ATCC 33889 / DSM 1251))).